The chain runs to 681 residues: Potassium-transporting ATPase ATP-binding subunit (681 aa).

The next 4 membrane-spanning stretches (helical) occupy residues 30–50 (LLVY…FFGI), 59–79 (LAIA…EAIA), 216–236 (ILLV…LPFT), and 255–275 (IALL…SIGI). D306 (4-aspartylphosphate intermediate) is an active-site residue. ATP-binding positions include D343, E347, 376-383 (FTATTRMS), and K394. The Mg(2+) site is built by D517 and D521. The next 3 helical transmembrane spans lie at 587–607 (FAII…LNLM), 615–635 (AILS…PLSL), and 661–681 (LIAP…LGIV).

The protein belongs to the cation transport ATPase (P-type) (TC 3.A.3) family. Type IA subfamily. In terms of assembly, the system is composed of three essential subunits: KdpA, KdpB and KdpC.

It localises to the cell membrane. The enzyme catalyses K(+)(out) + ATP + H2O = K(+)(in) + ADP + phosphate + H(+). Part of the high-affinity ATP-driven potassium transport (or Kdp) system, which catalyzes the hydrolysis of ATP coupled with the electrogenic transport of potassium into the cytoplasm. This subunit is responsible for energy coupling to the transport system and for the release of the potassium ions to the cytoplasm. This chain is Potassium-transporting ATPase ATP-binding subunit, found in Listeria monocytogenes serotype 4b (strain CLIP80459).